Reading from the N-terminus, the 206-residue chain is Small ribosomal subunit protein uS4 (206 aa).

The segment at 18–46 is disordered; sequence NIWGRPKSPVNRREYGPGQHGQRRKGKLS. An S4 RNA-binding domain is found at 94 to 156; that stretch reads RRLDAVVYRA…SKQNVAVLEA (63 aa).

Belongs to the universal ribosomal protein uS4 family. In terms of assembly, part of the 30S ribosomal subunit. Contacts protein S5. The interaction surface between S4 and S5 is involved in control of translational fidelity.

Its function is as follows. One of the primary rRNA binding proteins, it binds directly to 16S rRNA where it nucleates assembly of the body of the 30S subunit. Functionally, with S5 and S12 plays an important role in translational accuracy. The chain is Small ribosomal subunit protein uS4 from Ruegeria sp. (strain TM1040) (Silicibacter sp.).